The primary structure comprises 1755 residues: Transposon Ty1-JR2 Gag-Pol polyprotein (1755 aa).

The segment covering 1-16 (MESQQLSQHSHISHGS) has biased composition (low complexity). Disordered stretches follow at residues 1 to 93 (MESQ…MMTQ), 126 to 173 (PQSQ…RPPP), and 352 to 421 (GSRN…SKST). Composition is skewed to polar residues over residues 48-60 (TKAN…TPAS), 71-93 (SPQT…MMTQ), and 127-152 (QSQF…GNTF). Residues 153–165 (TDSSSADSDMTST) show a composition bias toward low complexity. The segment at 299 to 401 (NNGIHINNKV…NSKSKTARAH (103 aa)) is RNA-binding. The span at 402-418 (NVSTSNNSPSTDNDSIS) shows a compositional bias: low complexity. Serine 416 carries the phosphoserine modification. The active-site For protease activity; shared with dimeric partner is the aspartate 461. The tract at residues 583-640 (NVHTSESTRKYPYPFIHRMLAHANAQTIRYSLKNNTITYFNESDVDWSSAIDYQCPDC) is integrase-type zinc finger-like. Residues 660–835 (NSYEPFQYLH…AGLDISTLLP (176 aa)) enclose the Integrase catalytic domain. Aspartate 671 and aspartate 736 together coordinate Mg(2+). Disordered stretches follow at residues 956 to 1087 (SKAV…ETEK), 1092 to 1111 (RSPS…NIVP), and 1130 to 1186 (DLPL…EDNE). A compositionally biased stretch (low complexity) spans 960–969 (SPTDSTPPST). Polar residues predominate over residues 1005 to 1015 (STPQISNIEST). The segment covering 1038–1053 (ESSHASKSKDFRHSDS) has biased composition (basic and acidic residues). 2 stretches are compositionally biased toward polar residues: residues 1054–1082 (YSEN…QISD) and 1101–1111 (PENNSSHNIVP). Positions 1178 to 1212 (KKRSLEDNETEIKVSRDTWNTKNMRSLEPPRSKKR) match the Bipartite nuclear localization signal motif. Residues 1338 to 1476 (NNYYITQLDI…DILGLEIKYQ (139 aa)) form the Reverse transcriptase Ty1/copia-type domain. Positions 1346, 1427, 1428, 1610, 1652, and 1685 each coordinate Mg(2+). The region spanning 1610–1752 (DASYGNQPYY…IKTFKLLTNK (143 aa)) is the RNase H Ty1/copia-type domain.

The capsid protein forms a homotrimer, from which the VLPs are assembled. The protease is a homodimer, whose active site consists of two apposed aspartic acid residues. In terms of processing, initially, virus-like particles (VLPs) are composed of the structural unprocessed proteins Gag and Gag-Pol, and also contain the host initiator methionine tRNA (tRNA(i)-Met) which serves as a primer for minus-strand DNA synthesis, and a dimer of genomic Ty RNA. Processing of the polyproteins occurs within the particle and proceeds by an ordered pathway, called maturation. First, the protease (PR) is released by autocatalytic cleavage of the Gag-Pol polyprotein yielding capsid protein p45 and a Pol-p154 precursor protein. This cleavage is a prerequisite for subsequent processing of Pol-p154 at the remaining sites to release the mature structural and catalytic proteins. Maturation takes place prior to the RT reaction and is required to produce transposition-competent VLPs.

It localises to the cytoplasm. The protein localises to the nucleus. The catalysed reaction is DNA(n) + a 2'-deoxyribonucleoside 5'-triphosphate = DNA(n+1) + diphosphate. The enzyme catalyses Endonucleolytic cleavage to 5'-phosphomonoester.. Functionally, capsid protein (CA) is the structural component of the virus-like particle (VLP), forming the shell that encapsulates the retrotransposons dimeric RNA genome. The particles are assembled from trimer-clustered units and there are holes in the capsid shells that allow for the diffusion of macromolecules. CA also has nucleocapsid-like chaperone activity, promoting primer tRNA(i)-Met annealing to the multipartite primer-binding site (PBS), dimerization of Ty1 RNA and initiation of reverse transcription. Its function is as follows. The aspartyl protease (PR) mediates the proteolytic cleavages of the Gag and Gag-Pol polyproteins after assembly of the VLP. Reverse transcriptase/ribonuclease H (RT) is a multifunctional enzyme that catalyzes the conversion of the retro-elements RNA genome into dsDNA within the VLP. The enzyme displays a DNA polymerase activity that can copy either DNA or RNA templates, and a ribonuclease H (RNase H) activity that cleaves the RNA strand of RNA-DNA heteroduplexes during plus-strand synthesis and hydrolyzes RNA primers. The conversion leads to a linear dsDNA copy of the retrotransposon that includes long terminal repeats (LTRs) at both ends. In terms of biological role, integrase (IN) targets the VLP to the nucleus, where a subparticle preintegration complex (PIC) containing at least integrase and the newly synthesized dsDNA copy of the retrotransposon must transit the nuclear membrane. Once in the nucleus, integrase performs the integration of the dsDNA into the host genome. This is Transposon Ty1-JR2 Gag-Pol polyprotein (TY1B-JR2) from Saccharomyces cerevisiae (strain ATCC 204508 / S288c) (Baker's yeast).